Reading from the N-terminus, the 401-residue chain is Elongation factor Tu 1 (401 aa).

Positions 10-209 (KPHVNVGTIG…AVDEYIPTPV (200 aa)) constitute a tr-type G domain. The G1 stretch occupies residues 19–26 (GHVDHGKT). 19–26 (GHVDHGKT) lines the GTP pocket. Thr-26 contacts Mg(2+). Positions 60 to 64 (GITIA) are G2. Residues 81-84 (DCPG) are G3. Residues 81 to 85 (DCPGH) and 136 to 139 (NKVD) contribute to the GTP site. A G4 region spans residues 136–139 (NKVD). Positions 174–176 (SAL) are G5.

Belongs to the TRAFAC class translation factor GTPase superfamily. Classic translation factor GTPase family. EF-Tu/EF-1A subfamily. As to quaternary structure, monomer.

The protein resides in the cytoplasm. The enzyme catalyses GTP + H2O = GDP + phosphate + H(+). Functionally, GTP hydrolase that promotes the GTP-dependent binding of aminoacyl-tRNA to the A-site of ribosomes during protein biosynthesis. This chain is Elongation factor Tu 1, found in Roseiflexus sp. (strain RS-1).